Consider the following 676-residue polypeptide: Probable potassium transport system protein Kup (676 aa).

12 consecutive transmembrane segments (helical) span residues 14–34, 56–76, 97–117, 142–162, 173–193, 219–239, 252–272, 296–316, 345–365, 376–396, 402–422, and 429–449; these read GLLIAIGIVYGDIGTSPLYVM, ISLILWTVTLLTTVQTVIIAL, AAWLVWPALIGGAAILADGTL, VSNQTTVLVITIVILLVLFSI, AFGPIMLVWFAFLGVMGLINI, AGFAILGSIFLATTGAEALYS, SWPFVFVCLSLNYFGQGVWIL, LASIVLATLAAIIASQALITG, IYIPAVNKMLGITTIALVLFF, GLSITISMLTTTILLYEWLVL, LANLLFVIFFSTINILFMGSS, and GGYVSLLITLLIASVMVVWYF.

This sequence belongs to the HAK/KUP transporter (TC 2.A.72) family.

It is found in the cell membrane. The catalysed reaction is K(+)(in) + H(+)(in) = K(+)(out) + H(+)(out). Its function is as follows. Transport of potassium into the cell. Likely operates as a K(+):H(+) symporter. This is Probable potassium transport system protein Kup from Lactobacillus delbrueckii subsp. bulgaricus (strain ATCC BAA-365 / Lb-18).